A 236-amino-acid chain; its full sequence is Ribosome maturation protein SDO1 homolog (236 aa).

It belongs to the SDO1/SBDS family.

This chain is Ribosome maturation protein SDO1 homolog, found in Pyrococcus horikoshii (strain ATCC 700860 / DSM 12428 / JCM 9974 / NBRC 100139 / OT-3).